The chain runs to 113 residues: Endoribonuclease SymE (113 aa).

The SpoVT-AbrB domain maps to 29–74 (SRYPDYSRIPAITLKGQWLEAAGFATGTVVDVKVMEGCIVLTAQPP).

Belongs to the SymE family.

The protein localises to the cytoplasm. In terms of biological role, involved in the degradation and recycling of damaged RNA. It is itself a target for degradation by the ATP-dependent protease Lon. The sequence is that of Endoribonuclease SymE from Escherichia coli (strain 55989 / EAEC).